A 315-amino-acid polypeptide reads, in one-letter code: DNA-directed RNA polymerase subunit alpha (315 aa).

The segment at 1-228 is alpha N-terminal domain (alpha-NTD); that stretch reads MIEIEKPKIE…EHLNLFIDLS (228 aa). The tract at residues 245-315 is alpha C-terminal domain (alpha-CTD); the sequence is KEKVLEMTIE…LGLSLAPSED (71 aa).

This sequence belongs to the RNA polymerase alpha chain family. In terms of assembly, homodimer. The RNAP catalytic core consists of 2 alpha, 1 beta, 1 beta' and 1 omega subunit. When a sigma factor is associated with the core the holoenzyme is formed, which can initiate transcription.

It carries out the reaction RNA(n) + a ribonucleoside 5'-triphosphate = RNA(n+1) + diphosphate. Its function is as follows. DNA-dependent RNA polymerase catalyzes the transcription of DNA into RNA using the four ribonucleoside triphosphates as substrates. The protein is DNA-directed RNA polymerase subunit alpha of Acetivibrio thermocellus (strain ATCC 27405 / DSM 1237 / JCM 9322 / NBRC 103400 / NCIMB 10682 / NRRL B-4536 / VPI 7372) (Clostridium thermocellum).